The primary structure comprises 57 residues: MTLLKWALLFFVISVVAGILGFTGVSAASADIARILFYIFLVIFLVLLILGLTIFRV.

The next 2 helical transmembrane spans lie at 6 to 26 (WALL…TGVS) and 35 to 55 (ILFY…LTIF).

The protein belongs to the UPF0391 family.

Its subcellular location is the cell membrane. This chain is UPF0391 membrane protein BRADO2787, found in Bradyrhizobium sp. (strain ORS 278).